Consider the following 219-residue polypeptide: Probable GTP-binding protein EngB (219 aa).

Residues Gly33 to His217 form the EngB-type G domain. GTP is bound by residues Gly41 to Ser48, Gly68 to Glu72, Asp95 to Gly98, Thr162 to Asp165, and Thr196 to Ser198. Residues Ser48 and Thr70 each coordinate Mg(2+).

The protein belongs to the TRAFAC class TrmE-Era-EngA-EngB-Septin-like GTPase superfamily. EngB GTPase family. Requires Mg(2+) as cofactor.

In terms of biological role, necessary for normal cell division and for the maintenance of normal septation. The polypeptide is Probable GTP-binding protein EngB (Allorhizobium ampelinum (strain ATCC BAA-846 / DSM 112012 / S4) (Agrobacterium vitis (strain S4))).